The following is a 678-amino-acid chain: DNA ligase (678 aa).

NAD(+)-binding positions include 36-40 (DVVYD), 85-86 (SL), and E117. Catalysis depends on K119, which acts as the N6-AMP-lysine intermediate. R140, E177, K294, and K318 together coordinate NAD(+). Residues C412, C415, C430, and C435 each coordinate Zn(2+). Residues 598–678 (ISSTPLAGKT…QLLKMINPQE (81 aa)) enclose the BRCT domain.

This sequence belongs to the NAD-dependent DNA ligase family. LigA subfamily. Mg(2+) is required as a cofactor. The cofactor is Mn(2+).

It carries out the reaction NAD(+) + (deoxyribonucleotide)n-3'-hydroxyl + 5'-phospho-(deoxyribonucleotide)m = (deoxyribonucleotide)n+m + AMP + beta-nicotinamide D-nucleotide.. Functionally, DNA ligase that catalyzes the formation of phosphodiester linkages between 5'-phosphoryl and 3'-hydroxyl groups in double-stranded DNA using NAD as a coenzyme and as the energy source for the reaction. It is essential for DNA replication and repair of damaged DNA. In Gloeothece citriformis (strain PCC 7424) (Cyanothece sp. (strain PCC 7424)), this protein is DNA ligase.